Consider the following 809-residue polypeptide: WD repeat protein iqw1 (809 aa).

WD repeat units follow at residues 43–82 (GHTG…KPRH), 87–128 (GHVQ…EGGM), 141–180 (CALD…VCNQ), 193–233 (PYRI…KSFR), and 241–295 (SPEK…LFHV). The tract at residues 599–644 (SMYTGHSDLNDDDDDYQDEESYSYASDDDDESDEDSDEGPTLLSLR) is disordered. A compositionally biased stretch (acidic residues) spans 608-636 (NDDDDDYQDEESYSYASDDDDESDEDSDE). 2 WD repeats span residues 668–708 (CNVE…ILAI) and 711–750 (GDSE…PSGC).

In terms of assembly, interacts with ddb1.

It is found in the cytoplasm. Ligand-dependent coactivator of nuclear receptors that may function as a substrate receptor for CUL4-DDB1 E3 ubiquitin-protein ligase complex. This Schizosaccharomyces pombe (strain 972 / ATCC 24843) (Fission yeast) protein is WD repeat protein iqw1 (iqw1).